The primary structure comprises 287 residues: Phosphatidylserine decarboxylase proenzyme (287 aa).

Catalysis depends on charge relay system; for autoendoproteolytic cleavage activity residues D90, H147, and S252. S252 functions as the Schiff-base intermediate with substrate; via pyruvic acid; for decarboxylase activity in the catalytic mechanism. Position 252 is a pyruvic acid (Ser); by autocatalysis (S252).

Belongs to the phosphatidylserine decarboxylase family. PSD-B subfamily. Prokaryotic type I sub-subfamily. As to quaternary structure, heterodimer of a large membrane-associated beta subunit and a small pyruvoyl-containing alpha subunit. Pyruvate is required as a cofactor. Is synthesized initially as an inactive proenzyme. Formation of the active enzyme involves a self-maturation process in which the active site pyruvoyl group is generated from an internal serine residue via an autocatalytic post-translational modification. Two non-identical subunits are generated from the proenzyme in this reaction, and the pyruvate is formed at the N-terminus of the alpha chain, which is derived from the carboxyl end of the proenzyme. The autoendoproteolytic cleavage occurs by a canonical serine protease mechanism, in which the side chain hydroxyl group of the serine supplies its oxygen atom to form the C-terminus of the beta chain, while the remainder of the serine residue undergoes an oxidative deamination to produce ammonia and the pyruvoyl prosthetic group on the alpha chain. During this reaction, the Ser that is part of the protease active site of the proenzyme becomes the pyruvoyl prosthetic group, which constitutes an essential element of the active site of the mature decarboxylase.

The protein resides in the cell membrane. The catalysed reaction is a 1,2-diacyl-sn-glycero-3-phospho-L-serine + H(+) = a 1,2-diacyl-sn-glycero-3-phosphoethanolamine + CO2. Its pathway is phospholipid metabolism; phosphatidylethanolamine biosynthesis; phosphatidylethanolamine from CDP-diacylglycerol: step 2/2. Catalyzes the formation of phosphatidylethanolamine (PtdEtn) from phosphatidylserine (PtdSer). In Pseudomonas entomophila (strain L48), this protein is Phosphatidylserine decarboxylase proenzyme.